A 102-amino-acid polypeptide reads, in one-letter code: Transcription factor UPBEAT1 (102 aa).

The 51-residue stretch at 32-82 (IRPRKSVEASRRPCRAIHRRVKTLKELVPNTKTSEGLDGLFRQTADYILAL) folds into the bHLH domain.

Homodimer. As to expression, expressed in the root vascular tissue and in root hairs and lateral root caps. Detected at the protein level in all cell files in the elongation zone.

The protein localises to the nucleus. Functionally, transcription factor that modulates the balance between cellular proliferation and differentiation in root growth. Does not act through cytokinin and auxin signaling, but by repressing peroxidase expression in the elongation zone. The polypeptide is Transcription factor UPBEAT1 (UPB1) (Arabidopsis thaliana (Mouse-ear cress)).